The chain runs to 82 residues: M-theraphotoxin-Gr1a (82 aa).

An N-terminal signal peptide occupies residues 1–21; sequence MKTSVVFVIAGLALLSVVCYA. A propeptide spanning residues 22–46 is cleaved from the precursor; the sequence is SELKEQSSVNEVLSTIFHFEQPEER. Disulfide bonds link cysteine 48/cysteine 63, cysteine 55/cysteine 69, and cysteine 62/cysteine 76. A Phenylalanine amide modification is found at phenylalanine 80.

It belongs to the neurotoxin 10 (Hwtx-1) family. 52 (MTx4) subfamily. Expressed by the venom gland.

The protein resides in the secreted. Its function is as follows. This cationic hydrophobic peptide acts on a lot of different channels and has an antimicrobial activity. It blocks mechanosensitive ion channels (also named stretch-activated channels or SACs), without having effect on whole-cell voltage-sensitive currents. It also affects acetylcholine receptors (nAChRs) through interactions with membrane lipids by prolonging the closing time without affecting channel conductance or opening activity. It shows high affinity for lipid bilayers. It acts by partitioning into the membrane and perturbing the interface between the channel and the lipid bilayer without necessarily being in physical contact with the channel. It inhibits atrial fibrillation as well as the membrane motor of outer hair cells at low doses. It also binds to the voltage sensor of voltage-gated potassium channels from the archaebacterium Aeropyrum pernix (KvAP) without affecting channel gating. It also shows a low inhibition on a large spectra of sodium channels (Nav1.1/SCN1A, Nav1.2/SCN2A, Nav1.3/SCN3A, Nav1.4/SCN4A, Nav1.5/SCN5A, Nav1.6/SCN8A, Nav1.7/SCN9A) (IC(50)=7.4-14 uM), and potassium channels Kv11.1/KCNH2 and Kv11.2/KCNH6 (IC(50)=11 uM for both). It exhibits antimicrobial activities against the Gram-positive bacteria B.subtilis (MIC=0.5 uM), S.aureus (MIC=2-4 uM), and S.epidermidis (MIC=4-8 uM), and Gram-negative bacteria S.typhimurium (MIC=32.64 uM), P.aeruginosa (MIC=8-16 uM), and E.coli (MIC=8-16 uM). This chain is M-theraphotoxin-Gr1a, found in Grammostola rosea (Chilean rose tarantula).